We begin with the raw amino-acid sequence, 437 residues long: GTPase Obg (437 aa).

The region spanning Ser-2–Ile-161 is the Obg domain. One can recognise an OBG-type G domain in the interval Ala-162–Arg-335. Residues Gly-168–Ser-175, Phe-193–Ser-197, Asp-214–Gly-217, Asn-284–Asp-287, and Ser-316–Ala-318 contribute to the GTP site. Mg(2+)-binding residues include Ser-175 and Thr-195. Residues Phe-355–Asp-433 enclose the OCT domain.

It belongs to the TRAFAC class OBG-HflX-like GTPase superfamily. OBG GTPase family. As to quaternary structure, monomer. Mg(2+) is required as a cofactor.

Its subcellular location is the cytoplasm. Functionally, an essential GTPase which binds GTP, GDP and possibly (p)ppGpp with moderate affinity, with high nucleotide exchange rates and a fairly low GTP hydrolysis rate. Plays a role in control of the cell cycle, stress response, ribosome biogenesis and in those bacteria that undergo differentiation, in morphogenesis control. This Herpetosiphon aurantiacus (strain ATCC 23779 / DSM 785 / 114-95) protein is GTPase Obg.